We begin with the raw amino-acid sequence, 211 residues long: Regulator of G-protein signaling 2 (211 aa).

Disordered stretches follow at residues 14–33 (RPMDKSAGSGHKSEEKREKM) and 49–68 (LQNSSTPGKPKTGKKSKQQA). A necessary for membrane association region spans residues 32–66 (KMKRTLLKDWKTRLSYFLQNSSTPGKPKTGKKSKQ). The interval 79–116 (LWSEAFDELLASKYGLAAFRAFLKSEFCEENIEFWLAC) is necessary to inhibit protein synthesis. The RGS domain maps to 83–199 (AFDELLASKY…LESEFYQDLC (117 aa)).

As to quaternary structure, interacts with GNAQ. Does not interact with GNAI1 and GNAI3. Interacts with EIF2B5. Interacts with PRKG1 (isoform alpha). In terms of processing, phosphorylated by protein kinase C. Phosphorylation by PRKG1 leads to activation of RGS2 activity. Expressed in acute myelogenous leukemia (AML) and in acute lymphoblastic leukemia (ALL).

The protein resides in the cell membrane. Its subcellular location is the cytoplasm. It is found in the nucleus. The protein localises to the nucleolus. It localises to the mitochondrion. Functionally, regulates G protein-coupled receptor signaling cascades. Inhibits signal transduction by increasing the GTPase activity of G protein alpha subunits, thereby driving them into their inactive GDP-bound form. It is involved in the negative regulation of the angiotensin-activated signaling pathway. Plays a role in the regulation of blood pressure in response to signaling via G protein-coupled receptors and GNAQ. Plays a role in regulating the constriction and relaxation of vascular smooth muscle. Binds EIF2B5 and blocks its activity, thereby inhibiting the translation of mRNA into protein. The sequence is that of Regulator of G-protein signaling 2 (RGS2) from Homo sapiens (Human).